Reading from the N-terminus, the 273-residue chain is Undecaprenyl-diphosphatase (273 aa).

Transmembrane regions (helical) follow at residues 4 to 24, 43 to 63, 82 to 102, 108 to 128, 183 to 203, 217 to 237, and 248 to 268; these read LILLKALLLGIVEGLTEFLPI, KAKVFTVAIQLGAILAVCWEY, FVINLFIAFLPAAILGLLFIK, LFHPMPVAIALVTGGILILWA, AAEFSFFLAIPVMFAATFYDV, MFATGSVAAFISALIAIRGFI, and FAWYRIGFGLIVLLTAYSGLV.

Belongs to the UppP family.

It localises to the cell inner membrane. It catalyses the reaction di-trans,octa-cis-undecaprenyl diphosphate + H2O = di-trans,octa-cis-undecaprenyl phosphate + phosphate + H(+). In terms of biological role, catalyzes the dephosphorylation of undecaprenyl diphosphate (UPP). Confers resistance to bacitracin. This is Undecaprenyl-diphosphatase from Nitrosomonas europaea (strain ATCC 19718 / CIP 103999 / KCTC 2705 / NBRC 14298).